The following is a 189-amino-acid chain: HGPRTase-like protein 2 (189 aa).

It belongs to the purine/pyrimidine phosphoribosyltransferase family. Archaeal HPRT subfamily.

Functionally, may catalyze a purine salvage reaction, the substrate is unknown. The protein is HGPRTase-like protein 2 of Halalkalicoccus jeotgali (strain DSM 18796 / CECT 7217 / JCM 14584 / KCTC 4019 / B3).